Reading from the N-terminus, the 76-residue chain is Conotoxin Ca11b (76 aa).

Residues 1–19 (MKLVLAIVVILMLLSLSTG) form the signal peptide. A propeptide spanning residues 20 to 42 (AEMSDNHASMSANALRDRLLGPK) is cleaved from the precursor. Intrachain disulfides connect cysteine 46-cysteine 60, cysteine 53-cysteine 65, cysteine 59-cysteine 69, and cysteine 64-cysteine 76.

Expressed by the venom duct.

It is found in the secreted. This chain is Conotoxin Ca11b, found in Conus caracteristicus (Characteristic cone).